The sequence spans 356 residues: tRNA N6-adenosine threonylcarbamoyltransferase (356 aa).

The Fe cation site is built by His-131 and His-135. Substrate is bound by residues 154-158 (LVSGG), Asp-187, Gly-200, and Asn-289. Asp-317 provides a ligand contact to Fe cation.

It belongs to the KAE1 / TsaD family. It depends on Fe(2+) as a cofactor.

It localises to the cytoplasm. The catalysed reaction is L-threonylcarbamoyladenylate + adenosine(37) in tRNA = N(6)-L-threonylcarbamoyladenosine(37) in tRNA + AMP + H(+). Its function is as follows. Required for the formation of a threonylcarbamoyl group on adenosine at position 37 (t(6)A37) in tRNAs that read codons beginning with adenine. Is involved in the transfer of the threonylcarbamoyl moiety of threonylcarbamoyl-AMP (TC-AMP) to the N6 group of A37, together with TsaE and TsaB. TsaD likely plays a direct catalytic role in this reaction. This chain is tRNA N6-adenosine threonylcarbamoyltransferase, found in Ruthia magnifica subsp. Calyptogena magnifica.